A 355-amino-acid chain; its full sequence is Guanine nucleotide-binding protein G(i) subunit alpha-2 (355 aa).

Gly2 carries the N-myristoyl glycine lipid modification. Cys3 is lipidated: S-palmitoyl cysteine. A G-alpha domain is found at 32 to 355; it reads REVKLLLLGA…KNNLKDCGLF (324 aa). The interval 35-48 is G1 motif; sequence KLLLLGAGESGKST. Residues 40–47, 176–182, 201–205, 270–273, and Ala327 contribute to the GTP site; these read GAGESGKS, LRTRVKT, DVGGQ, and NKKD. A Mg(2+)-binding site is contributed by Ser47. A G2 motif region spans residues 174 to 182; sequence DVLRTRVKT. Residue Arg179 is modified to ADP-ribosylarginine; by cholera toxin. Thr182 contacts Mg(2+). The segment at 197 to 206 is G3 motif; sequence FKMFDVGGQR. At Gln205 the chain carries Deamidated glutamine; by Photorhabdus PAU_02230. Positions 266 to 273 are G4 motif; it reads ILFLNKKD. A G5 motif region spans residues 325-330; sequence TCATDT. Cys352 is modified (ADP-ribosylcysteine; by pertussis toxin).

It belongs to the G-alpha family. G(i/o/t/z) subfamily. As to quaternary structure, g proteins are composed of 3 units; alpha, beta and gamma. The alpha chain contains the guanine nucleotide binding site. In this context, interacts with GNB2. Interacts with GPSM1. Interacts with RGS12 and RGS14. Interacts with UNC5B. Interacts (inactive GDP-bound form) with NUCB1 (via GBA motif); the interaction leads to activation of GNAI3. Interacts (inactive GDP-bound form) with CCDC88C/DAPLE (via GBA motif). Interacts (inactive GDP-bound form) with CCDC8A/GIV (via GBA motif). Interacts with CXCR1 and CXCR2. In terms of processing, (Microbial infection) Deamidated at Gln-205 by Photorhabdus asymbiotica toxin PAU_02230, blocking GTP hydrolysis of heterotrimeric GNAQ or GNA11 and G-alphai (GNAI1, GNAI2 or GNAI3) proteins, thereby activating RhoA.

The protein resides in the cytoplasm. The protein localises to the cytoskeleton. Its subcellular location is the microtubule organizing center. It is found in the centrosome. It localises to the cell membrane. The protein resides in the membrane. Guanine nucleotide-binding proteins (G proteins) are involved as modulators or transducers in various transmembrane signaling systems. The G(i) proteins are involved in hormonal regulation of adenylate cyclase: they inhibit the cyclase in response to beta-adrenergic stimuli. May play a role in cell division. In terms of biological role, regulates the cell surface density of dopamine receptors DRD2 by sequestrating them as an intracellular pool. The protein is Guanine nucleotide-binding protein G(i) subunit alpha-2 (GNAI2) of Homo sapiens (Human).